Here is a 324-residue protein sequence, read N- to C-terminus: UDP-N-acetylenolpyruvoylglucosamine reductase (324 aa).

The region spanning 38–231 is the FAD-binding PCMH-type domain; the sequence is AGGSARRLYV…SRERIRSLLK (194 aa). The active site involves Arg195. Ser246 (proton donor) is an active-site residue. Residue Glu316 is part of the active site.

The protein belongs to the MurB family. Requires FAD as cofactor.

It localises to the cytoplasm. The catalysed reaction is UDP-N-acetyl-alpha-D-muramate + NADP(+) = UDP-N-acetyl-3-O-(1-carboxyvinyl)-alpha-D-glucosamine + NADPH + H(+). It functions in the pathway cell wall biogenesis; peptidoglycan biosynthesis. Functionally, cell wall formation. This is UDP-N-acetylenolpyruvoylglucosamine reductase from Thiobacillus denitrificans (strain ATCC 25259 / T1).